A 772-amino-acid chain; its full sequence is Protein U58 (772 aa).

This sequence belongs to the herpesviridae UL87 family.

This is Protein U58 (U58) from Homo sapiens (Human).